We begin with the raw amino-acid sequence, 109 residues long: MTVLSEKKCIPCEGGVPPLEKKEIDKLLAELQNEWQVNELGHLYKKYKFPNFVKALDFANKIAAIAEQEVHHPNLNISWGVCNVEIWTHKINGLTENDFILAAKIESKI.

It belongs to the pterin-4-alpha-carbinolamine dehydratase family.

It catalyses the reaction (4aS,6R)-4a-hydroxy-L-erythro-5,6,7,8-tetrahydrobiopterin = (6R)-L-erythro-6,7-dihydrobiopterin + H2O. The protein is Putative pterin-4-alpha-carbinolamine dehydratase of Rickettsia canadensis (strain McKiel).